Reading from the N-terminus, the 341-residue chain is Glycerol-3-phosphate dehydrogenase [NAD(P)+] (341 aa).

NADPH-binding residues include serine 14, phenylalanine 15, arginine 35, and lysine 108. Lysine 108 and glycine 136 together coordinate sn-glycerol 3-phosphate. An NADPH-binding site is contributed by alanine 140. Sn-glycerol 3-phosphate-binding residues include lysine 191, aspartate 244, serine 254, arginine 255, and asparagine 256. The active-site Proton acceptor is lysine 191. Arginine 255 is an NADPH binding site. Residues valine 279 and glutamate 281 each coordinate NADPH.

The protein belongs to the NAD-dependent glycerol-3-phosphate dehydrogenase family.

The protein localises to the cytoplasm. It catalyses the reaction sn-glycerol 3-phosphate + NAD(+) = dihydroxyacetone phosphate + NADH + H(+). The catalysed reaction is sn-glycerol 3-phosphate + NADP(+) = dihydroxyacetone phosphate + NADPH + H(+). It participates in membrane lipid metabolism; glycerophospholipid metabolism. Functionally, catalyzes the reduction of the glycolytic intermediate dihydroxyacetone phosphate (DHAP) to sn-glycerol 3-phosphate (G3P), the key precursor for phospholipid synthesis. This is Glycerol-3-phosphate dehydrogenase [NAD(P)+] from Pseudomonas putida (strain ATCC 47054 / DSM 6125 / CFBP 8728 / NCIMB 11950 / KT2440).